We begin with the raw amino-acid sequence, 550 residues long: Membrane protein insertase YidC (550 aa).

The helical transmembrane segment at 6–26 threads the bilayer; that stretch reads NLLVIALLFVSFMIWQTWEQD. 2 disordered regions span residues 28 to 54 and 111 to 132; these read APKP…GVPA and QSGL…RPLY. The segment covering 30 to 52 has biased composition (low complexity); it reads KPQVQQTTQTTTTAAGSAASQGV. The segment covering 111–127 has biased composition (polar residues); the sequence is QSGLTGRNGPDNPNNNK. Helical transmembrane passes span 346–366, 421–441, 459–479, and 500–520; these read KWIH…TFIV, LGGC…YYML, LSAQ…MFFI, and PVIF…YYIV.

This sequence belongs to the OXA1/ALB3/YidC family. Type 1 subfamily. Interacts with the Sec translocase complex via SecD. Specifically interacts with transmembrane segments of nascent integral membrane proteins during membrane integration.

Its subcellular location is the cell inner membrane. Functionally, required for the insertion and/or proper folding and/or complex formation of integral membrane proteins into the membrane. Involved in integration of membrane proteins that insert both dependently and independently of the Sec translocase complex, as well as at least some lipoproteins. Aids folding of multispanning membrane proteins. This Cronobacter sakazakii (strain ATCC BAA-894) (Enterobacter sakazakii) protein is Membrane protein insertase YidC.